We begin with the raw amino-acid sequence, 292 residues long: Secreted frizzled-related protein 2 (292 aa).

The signal sequence occupies residues 1–20 (MPRRLCALLLLASQCLGSTA). The 121-residue stretch at 32–152 (YKRSNCKPIP…PKDNDLCIPL (121 aa)) folds into the FZ domain. Intrachain disulfides connect Cys-37–Cys-100, Cys-47–Cys-93, Cys-84–Cys-122, Cys-111–Cys-149, Cys-115–Cys-139, Cys-169–Cys-242, and Cys-187–Cys-292. Positions 169–292 (CDACKNKNED…FSRSIRKLQC (124 aa)) constitute an NTR domain.

The protein belongs to the secreted frizzled-related protein (sFRP) family.

It is found in the secreted. In terms of biological role, soluble frizzled-related proteins (sFRPS) function as modulators of Wnt signaling through direct interaction with Wnts. They have a role in regulating cell growth and differentiation in specific cell types. SFRP2 appears to be associated with myogenesis. The sequence is that of Secreted frizzled-related protein 2 (SFRP2) from Gallus gallus (Chicken).